We begin with the raw amino-acid sequence, 342 residues long: MTTLTITRPDDWHVHLRDGEVLKDTVRDISRYNGRALIMPNTVPPVTNTEMALAYRDRILKEQHGEQFEPLMALYLTDNTTPEEIRAAKATGKIVAAKLYPAGATTNSDSGVTDAKNIYHVLEAMEEVGMLLLVHGEVTHHHVDIFDREKEFLDTVLAPIVNDFPNLKIVLEHITTADAAQFVNNASDNVAATITAHHLLFNRNHMLVGGIKPHFYCLPILKRNTHQQALIEAATSGSKKFFLGTDSAPHAKGAKESACGCAGSYTAHAALELYAEVFEKEGKLENLEAFASFNGPDFYGIARNADTVTLEKSAWDVPESMPFGNDIVVPIRANEQIEWKVK.

Residues H13 and H15 each coordinate Zn(2+). Residues 15–17 (HLR) and N41 contribute to the substrate site. Positions 98, 135, and 173 each coordinate Zn(2+). The residue at position 98 (K98) is an N6-carboxylysine. Residue H135 coordinates substrate. L218 lines the substrate pocket. Residue D246 coordinates Zn(2+). D246 is an active-site residue. Substrate contacts are provided by H250 and A262.

This sequence belongs to the metallo-dependent hydrolases superfamily. DHOase family. Class II DHOase subfamily. Homodimer. Zn(2+) is required as a cofactor.

It carries out the reaction (S)-dihydroorotate + H2O = N-carbamoyl-L-aspartate + H(+). The protein operates within pyrimidine metabolism; UMP biosynthesis via de novo pathway; (S)-dihydroorotate from bicarbonate: step 3/3. Catalyzes the reversible cyclization of carbamoyl aspartate to dihydroorotate. The chain is Dihydroorotase from Vibrio parahaemolyticus serotype O3:K6 (strain RIMD 2210633).